A 271-amino-acid polypeptide reads, in one-letter code: Elongation factor Ts (271 aa).

The segment at 76–79 (TDFV) is involved in Mg(2+) ion dislocation from EF-Tu.

It belongs to the EF-Ts family.

The protein localises to the cytoplasm. Functionally, associates with the EF-Tu.GDP complex and induces the exchange of GDP to GTP. It remains bound to the aminoacyl-tRNA.EF-Tu.GTP complex up to the GTP hydrolysis stage on the ribosome. The sequence is that of Elongation factor Ts from Mycolicibacterium gilvum (strain PYR-GCK) (Mycobacterium gilvum (strain PYR-GCK)).